We begin with the raw amino-acid sequence, 309 residues long: Malate dehydrogenase (309 aa).

NAD(+)-binding positions include 9-14 and Asp-33; that span reads GAGFVG. Substrate-binding residues include Arg-82 and Arg-88. NAD(+)-binding positions include Asn-95 and 118-120; that span reads VNN. Substrate is bound by residues Asn-120 and Arg-151. His-175 (proton acceptor) is an active-site residue.

The protein belongs to the LDH/MDH superfamily. MDH type 3 family.

It carries out the reaction (S)-malate + NAD(+) = oxaloacetate + NADH + H(+). Its function is as follows. Catalyzes the reversible oxidation of malate to oxaloacetate. This chain is Malate dehydrogenase, found in Roseiflexus sp. (strain RS-1).